The sequence spans 201 residues: Small ribosomal subunit protein uS5 (201 aa).

The tract at residues 1-28 (MAGPQRRGSGAGGGERRDRKGRDGGASA) is disordered. A compositionally biased stretch (basic and acidic residues) spans 14-23 (GERRDRKGRD). The region spanning 34-97 (YVERVVAINR…EEAKKNFFKV (64 aa)) is the S5 DRBM domain.

It belongs to the universal ribosomal protein uS5 family. Part of the 30S ribosomal subunit. Contacts proteins S4 and S8.

Functionally, with S4 and S12 plays an important role in translational accuracy. In terms of biological role, located at the back of the 30S subunit body where it stabilizes the conformation of the head with respect to the body. In Streptomyces griseus subsp. griseus (strain JCM 4626 / CBS 651.72 / NBRC 13350 / KCC S-0626 / ISP 5235), this protein is Small ribosomal subunit protein uS5.